The primary structure comprises 554 residues: MNLDSLSKIIKNKIQNVLYPTSKALLSSDDPSKRAETCYDLSQKIEEFELVCDELYGIIEIHKQNVIFSNINNGTHISKENNPEVLFNSLVSRLSTLRQTKSTMDSFAKEISIVQPIDNKANTNNNNNNNNNNNNNNNNNNNNNNNTNTNTNNTNNTNNTTNTNNTNNNNNNNYNNNNNNNNNNNNNNNNNNNNNNNNSINNSINNNSNNKVGSNDNPSTAPITENNTENNAGNTNNTNNNNNNNNNNNNNNNNNNNNNNNNTNQVAESSNISSNTTPPETTNIVNDPNSVSGGNLTNTEAPMEISDNSEIQHPQQEQQQQQQQQQQQQQQQQQQQQQPQEQIPQQQQPQLPMQQEQIQQLPQQQTPPSQQQPQQTPPLPQQFQQPLVNVNQITSPTLENQSISGNNNNNNDGQTISPQQQQEQLQLQMQQLQQLQMQQQQMNFNPTEPINTNFYNIDLQQPIQQQTLNNNNNNINSLENQINTNLGGNTFNTGTTPPLQQQPQPQQQQQINNPEINQIDDDNTMKETIDVDKIIEESNNVNNNVNNRQVIDLE.

Disordered stretches follow at residues 118 to 301 (DNKA…NTEA), 330 to 381 (QQQQ…PLPQ), 398 to 428 (LENQ…LQLQ), and 483 to 524 (NTNL…DDNT). A compositionally biased stretch (low complexity) spans 122–210 (NTNNNNNNNN…NNSINNNSNN (89 aa)). Residues 167-194 (NNNNNNNYNNNNNNNNNNNNNNNNNNNN) are a coiled coil. Residues 211–225 (KVGSNDNPSTAPITE) are compositionally biased toward polar residues. Low complexity predominate over residues 226-264 (NNTENNAGNTNNTNNNNNNNNNNNNNNNNNNNNNNNNTN). A compositionally biased stretch (polar residues) spans 265–300 (QVAESSNISSNTTPPETTNIVNDPNSVSGGNLTNTE). Low complexity-rich tracts occupy residues 330-374 (QQQQ…QQPQ), 419-428 (QQQQEQLQLQ), and 483-517 (NTNL…PEIN). A coiled-coil region spans residues 419 to 486 (QQQQEQLQLQ…SLENQINTNL (68 aa)).

Belongs to the Mediator complex subunit 29 family. In terms of assembly, component of the Mediator complex.

Its subcellular location is the nucleus. In terms of biological role, component of the Mediator complex, a coactivator involved in the regulated transcription of nearly all RNA polymerase II-dependent genes. Mediator functions as a bridge to convey information from gene-specific regulatory proteins to the basal RNA polymerase II transcription machinery. Mediator is recruited to promoters by direct interactions with regulatory proteins and serves as a scaffold for the assembly of a functional preinitiation complex with RNA polymerase II and the general transcription factors. The sequence is that of Putative mediator of RNA polymerase II transcription subunit 29 (med29) from Dictyostelium discoideum (Social amoeba).